A 361-amino-acid chain; its full sequence is Peptide chain release factor 1 (361 aa).

At Gln237 the chain carries N5-methylglutamine. The segment covering Asp285–Arg296 has biased composition (basic and acidic residues). Residues Asp285 to Arg305 form a disordered region.

Belongs to the prokaryotic/mitochondrial release factor family. Post-translationally, methylated by PrmC. Methylation increases the termination efficiency of RF1.

The protein resides in the cytoplasm. In terms of biological role, peptide chain release factor 1 directs the termination of translation in response to the peptide chain termination codons UAG and UAA. In Shewanella sediminis (strain HAW-EB3), this protein is Peptide chain release factor 1.